Consider the following 361-residue polypeptide: Diacylglycerol O-acyltransferase 2 (361 aa).

Over 1–42 the chain is Cytoplasmic; the sequence is MKTLIAAYSGVLRGTGSSILSALQDLFSVTWLNRAKVEKQLQ. The helical transmembrane segment at 43 to 61 threads the bilayer; it reads VISVLQWVLSFLVLGVACS. Over 62–65 the chain is Lumenal; that stretch reads VILM. The chain crosses the membrane as a helical span at residues 66 to 85; that stretch reads YTFCTDCWLIAVLYFTWLVF. The Cytoplasmic portion of the chain corresponds to 86–361; that stretch reads DWNTPKKGGR…LPETEVLEVN (276 aa).

This sequence belongs to the diacylglycerol acyltransferase family. As to quaternary structure, forms multimeric complexes consisting of several DGAT2 subunits. Interacts with SLC27A1 and this interaction is enhanced in the presence of ZFYVE1.

It is found in the endoplasmic reticulum membrane. The protein resides in the lipid droplet. The protein localises to the cytoplasm. Its subcellular location is the perinuclear region. The catalysed reaction is an acyl-CoA + a 1,2-diacyl-sn-glycerol = a triacyl-sn-glycerol + CoA. It catalyses the reaction all-trans-retinol + an acyl-CoA = an all-trans-retinyl ester + CoA. It carries out the reaction 2-(9Z-octadecenoyl)-glycerol + (9Z)-octadecenoyl-CoA = 1,2-di-(9Z-octadecenoyl)-sn-glycerol + CoA. The enzyme catalyses 1,2-di-(9Z-octadecenoyl)-sn-glycerol + (9Z)-octadecenoyl-CoA = 1,2,3-tri-(9Z-octadecenoyl)-glycerol + CoA. The catalysed reaction is all-trans-retinol + hexadecanoyl-CoA = all-trans-retinyl hexadecanoate + CoA. It catalyses the reaction 1-O-(9Z-octadecenyl)-glycerol + (9Z)-octadecenoyl-CoA = 1-O-(9Z-octadecyl)-3-(9Z-octadecenoyl)-glycerol + CoA. It carries out the reaction 1-(9Z-octadecenoyl)-glycerol + (9Z)-octadecenoyl-CoA = 1,2-di-(9Z-octadecenoyl)-glycerol + CoA. The enzyme catalyses 1,2-di-(9Z-octadecenoyl)-sn-glycerol + hexadecanoyl-CoA = 1,2-di-(9Z)-octadecenoyl-3-hexadecanoyl-sn-glycerol + CoA. The catalysed reaction is 1,3-di-(9Z-octadecenoyl)-glycerol + (9Z)-octadecenoyl-CoA = 1,2,3-tri-(9Z-octadecenoyl)-glycerol + CoA. It catalyses the reaction 2,3-di-(9Z)-octadecenoyl-sn-glycerol + (9Z)-octadecenoyl-CoA = 1,2,3-tri-(9Z-octadecenoyl)-glycerol + CoA. It carries out the reaction 2-(9Z-octadecenoyl)-glycerol + hexadecanoyl-CoA = 1-hexadecanoyl-2-(9Z-octadecenoyl)-sn-glycerol + CoA. It functions in the pathway glycerolipid metabolism; triacylglycerol biosynthesis. Inhibited by niacin. In terms of biological role, essential acyltransferase that catalyzes the terminal and only committed step in triacylglycerol synthesis by using diacylglycerol and fatty acyl CoA as substrates. Required for synthesis and storage of intracellular triglycerides. Probably plays a central role in cytosolic lipid accumulation. In liver, is primarily responsible for incorporating endogenously synthesized fatty acids into triglycerides. Also functions as an acyl-CoA retinol acyltransferase (ARAT). Also able to use 1-monoalkylglycerol (1-MAkG) as an acyl acceptor for the synthesis of monoalkyl-monoacylglycerol (MAMAG). The protein is Diacylglycerol O-acyltransferase 2 (DGAT2) of Bos taurus (Bovine).